The following is a 584-amino-acid chain: Probable DNA ligase (584 aa).

ATP is bound at residue Glu248. The N6-AMP-lysine intermediate role is filled by Lys250. Positions 255, 270, 299, 339, 416, and 422 each coordinate ATP.

This sequence belongs to the ATP-dependent DNA ligase family. Mg(2+) serves as cofactor.

The enzyme catalyses ATP + (deoxyribonucleotide)n-3'-hydroxyl + 5'-phospho-(deoxyribonucleotide)m = (deoxyribonucleotide)n+m + AMP + diphosphate.. In terms of biological role, DNA ligase that seals nicks in double-stranded DNA during DNA replication, DNA recombination and DNA repair. This Aquifex aeolicus (strain VF5) protein is Probable DNA ligase.